The following is a 259-amino-acid chain: L-cystine import ATP-binding protein TcyN (259 aa).

The region spanning 2 to 239 is the ABC transporter domain; the sequence is IEIKNIHKQF…TKKDRTRQFL (238 aa). Residue 34-41 coordinates ATP; that stretch reads GPSGSGKT.

This sequence belongs to the ABC transporter superfamily. L-cystine importer (TC 3.A.1.3.13) family. In terms of assembly, the complex is composed of two ATP-binding proteins (TcyN), two transmembrane proteins (TcyL and TcyM) and two solute-binding proteins (TcyJ and TcyK).

It is found in the cell membrane. In terms of biological role, part of the ABC transporter complex TcyJKLMN involved in L-cystine import. Responsible for energy coupling to the transport system. Is also involved in cystathionine, djenkolate, and S-methylcysteine transport. The chain is L-cystine import ATP-binding protein TcyN (tcyN) from Bacillus subtilis (strain 168).